A 251-amino-acid chain; its full sequence is RNA polymerase sigma factor SigI (251 aa).

Positions 61–74 match the Polymerase core binding motif; sequence DEFSIGLIAFNEAI. The segment at residues 206–225 is a DNA-binding region (H-T-H motif); the sequence is VKQLEQLVSVSRKTIERNRK.

The protein belongs to the sigma-70 factor family. SigI subfamily. In terms of assembly, interacts with RsgI.

Its subcellular location is the cytoplasm. Negatively regulated by the anti-sigma-I factor RsgI. Upon exposure to heat, SigI is released from RsgI and activated. Transient heat activation of SigI may depend upon DnaK chaperone. Sigma factors are initiation factors that promote the attachment of RNA polymerase to specific initiation sites and are then released. This sigma factor is involved in regulation of cell wall metabolism in response to heat stress. Acts by regulating the expression of genes such as bcrC, mreBH and lytE. Also plays a role in survival at low temperatures. This Bacillus subtilis (strain 168) protein is RNA polymerase sigma factor SigI.